Consider the following 362-residue polypeptide: Apelin receptor A (362 aa).

Topologically, residues methionine 1–leucine 37 are extracellular. Asparagine 19 is a glycosylation site (N-linked (GlcNAc...) asparagine). 2 disulfide bridges follow: cysteine 26–cysteine 286 and cysteine 108–cysteine 185. A helical transmembrane segment spans residues leucine 38–phenylalanine 58. Over threonine 59–asparagine 76 the chain is Cytoplasmic. A helical membrane pass occupies residues leucine 77–leucine 97. The Extracellular segment spans residues glycine 98–leucine 110. A helical transmembrane segment spans residues serine 111–phenylalanine 131. Topologically, residues aspartate 132–serine 151 are cytoplasmic. Residues isoleucine 152–isoleucine 172 traverse the membrane as a helical segment. Residues leucine 173–asparagine 199 are Extracellular-facing. N-linked (GlcNAc...) asparagine glycosylation is present at asparagine 181. The helical transmembrane segment at phenylalanine 200–leucine 220 threads the bilayer. The Cytoplasmic portion of the chain corresponds to methionine 221–arginine 248. The helical transmembrane segment at leucine 249–isoleucine 269 threads the bilayer. The Extracellular portion of the chain corresponds to leucine 270–histidine 296. A helical transmembrane segment spans residues proline 297 to phenylalanine 317. Topologically, residues aspartate 318–valine 362 are cytoplasmic.

The protein belongs to the G-protein coupled receptor 1 family. In terms of tissue distribution, expressed in all blood vessels including the posterior cardinal vein, intersomitic veins and the vitelline vein network. At the gastrula stage, exclusively expressed in the mesodermal layer and at the neurula stage in the lateral plate mesoderm. Larval expression is observed in the endothelium of the primary blood vessels and the forming heart.

The protein resides in the cell membrane. In terms of biological role, g protein-coupled receptor for peptide hormones apelin (apln) and apelin receptor early endogenous ligand (apela), that plays a role in the regulation of normal cardiovascular function and fluid homeostasis. When acting as apelin receptor, activates both G(i) protein pathway that inhibits adenylate cyclase activity, and the beta-arrestin pathway that promotes internalization of the receptor. Also functions as mechanoreceptor that is activated by pathological stimuli in a G-protein-independent fashion to induce beta-arrestin signaling, hence eliciting cardiac hypertrophy. However, the presence of apelin ligand blunts cardiac hypertrophic induction from APLNR/APJ on response to pathological stimuli. Plays a key role in early development such as gastrulation, blood vessels formation and heart morphogenesis by acting as a receptor for apela hormone, promoting endoderm and mesendoderm cell migration and regulating the migration of cells fated to become myocardial progenitors, respectively. Promotes angioblast migration toward the embryonic midline, i.e. the position of the future vessel formation, during vasculogenesis. May promote sinus venosus (SV)-derived endothelial cells migration into the developing heart to promote coronary blood vessel development. Required for cardiovascular development, particularly for intersomitic vein angiogenesis by acting as a receptor for apln hormone. Also plays a role in various processes in adults such as regulation of blood vessel formation, blood pressure, heart contractility, and heart failure. Acts upstream of the i/o type of G-alpha proteins in the differentiation of endothelium, erythroid cells, myeloid cells and cardiomyocytes. This Xenopus laevis (African clawed frog) protein is Apelin receptor A (aplnr-a).